Reading from the N-terminus, the 239-residue chain is Ribosomal RNA small subunit methyltransferase A (239 aa).

S-adenosyl-L-methionine-binding residues include Asn23, Ile25, Gly50, Glu72, Asp97, and Asn116.

It belongs to the class I-like SAM-binding methyltransferase superfamily. rRNA adenine N(6)-methyltransferase family. RsmA subfamily.

It is found in the cytoplasm. The enzyme catalyses adenosine(1518)/adenosine(1519) in 16S rRNA + 4 S-adenosyl-L-methionine = N(6)-dimethyladenosine(1518)/N(6)-dimethyladenosine(1519) in 16S rRNA + 4 S-adenosyl-L-homocysteine + 4 H(+). Functionally, specifically dimethylates two adjacent adenosines (A1518 and A1519) in the loop of a conserved hairpin near the 3'-end of 16S rRNA in the 30S particle. May play a critical role in biogenesis of 30S subunits. This is Ribosomal RNA small subunit methyltransferase A from Rickettsia felis (strain ATCC VR-1525 / URRWXCal2) (Rickettsia azadi).